The following is a 414-amino-acid chain: Gamma-glutamyl phosphate reductase (414 aa).

The protein belongs to the gamma-glutamyl phosphate reductase family.

Its subcellular location is the cytoplasm. It carries out the reaction L-glutamate 5-semialdehyde + phosphate + NADP(+) = L-glutamyl 5-phosphate + NADPH + H(+). Its pathway is amino-acid biosynthesis; L-proline biosynthesis; L-glutamate 5-semialdehyde from L-glutamate: step 2/2. In terms of biological role, catalyzes the NADPH-dependent reduction of L-glutamate 5-phosphate into L-glutamate 5-semialdehyde and phosphate. The product spontaneously undergoes cyclization to form 1-pyrroline-5-carboxylate. The protein is Gamma-glutamyl phosphate reductase of Limosilactobacillus reuteri (strain DSM 20016) (Lactobacillus reuteri).